The sequence spans 372 residues: Aminomethyltransferase (372 aa).

Belongs to the GcvT family. As to quaternary structure, the glycine cleavage system is composed of four proteins: P, T, L and H.

The catalysed reaction is N(6)-[(R)-S(8)-aminomethyldihydrolipoyl]-L-lysyl-[protein] + (6S)-5,6,7,8-tetrahydrofolate = N(6)-[(R)-dihydrolipoyl]-L-lysyl-[protein] + (6R)-5,10-methylene-5,6,7,8-tetrahydrofolate + NH4(+). Functionally, the glycine cleavage system catalyzes the degradation of glycine. The chain is Aminomethyltransferase from Streptomyces coelicolor (strain ATCC BAA-471 / A3(2) / M145).